A 901-amino-acid polypeptide reads, in one-letter code: Protein translocase subunit SecA (901 aa).

ATP contacts are provided by residues glutamine 85, 103–107, and aspartate 492; that span reads GEGKT. A disordered region spans residues 828–901; it reads GLVTDDGGNP…PKNRRNKKRR (74 aa). Positions 871-881 are enriched in basic and acidic residues; sequence DGQKPRGEGNR. A compositionally biased stretch (basic residues) spans 882–901; it reads AARRSAASKKPKNRRNKKRR.

This sequence belongs to the SecA family. Monomer and homodimer. Part of the essential Sec protein translocation apparatus which comprises SecA, SecYEG and auxiliary proteins SecDF. Other proteins may also be involved.

Its subcellular location is the cell membrane. It localises to the cytoplasm. It catalyses the reaction ATP + H2O + cellular proteinSide 1 = ADP + phosphate + cellular proteinSide 2.. Its function is as follows. Part of the Sec protein translocase complex. Interacts with the SecYEG preprotein conducting channel. Has a central role in coupling the hydrolysis of ATP to the transfer of proteins into and across the cell membrane, serving as an ATP-driven molecular motor driving the stepwise translocation of polypeptide chains across the membrane. This is Protein translocase subunit SecA from Cutibacterium acnes (strain DSM 16379 / KPA171202) (Propionibacterium acnes).